A 484-amino-acid chain; its full sequence is Signal transduction histidine-protein kinase/phosphatase MprB (484 aa).

Low complexity predominate over residues 1–10; sequence MAADNAGRWP. Residues 1–23 are disordered; sequence MAADNAGRWPGQPPGPPAPTHPA. At 1–31 the chain is on the cytoplasmic side; that stretch reads MAADNAGRWPGQPPGPPAPTHPASSVSLRWR. A compositionally biased stretch (pro residues) spans 11–20; sequence GQPPGPPAPT. Residues 32–52 traverse the membrane as a helical segment; the sequence is VMLLAMSMVVISVVLMAVAVF. The Extracellular portion of the chain corresponds to 53 to 172; it reads AVTSRALYDD…TGKVLKRLGT (120 aa). A helical membrane pass occupies residues 173 to 193; it reads VLLIVGGLGVAVAAIAGGMVA. An HAMP domain is found at 194 to 246; it reads SAGLRPVGRLTQAAERVARTDDLRPIPVIGNDELARLTETFNMMLRALAESRE. Topologically, residues 194–484 are cytoplasmic; it reads SAGLRPVGRL…SPAGSDEAER (291 aa). In terms of domain architecture, Histidine kinase spans 254-474; that stretch reads DAGHELRTPL…AMHVVLPGRP (221 aa). His-257 is subject to Phosphohistidine; by autocatalysis.

Mg(2+) serves as cofactor. The cofactor is Mn(2+). Autophosphorylated.

The protein localises to the cell membrane. It catalyses the reaction ATP + protein L-histidine = ADP + protein N-phospho-L-histidine.. Functionally, member of the two-component regulatory system MprB/MprA which contributes to maintaining a balance among several systems involved in stress resistance and is required for establishment and maintenance of persistent infection in the host. In response to environmental signals MprB acts both as a membrane-associated protein kinase that undergoes autophosphorylation and subsequently transfers the phosphate to MprA, and a protein phosphatase that dephosphorylates phospho-MprA. This is Signal transduction histidine-protein kinase/phosphatase MprB (mprB) from Mycolicibacterium vanbaalenii (strain DSM 7251 / JCM 13017 / BCRC 16820 / KCTC 9966 / NRRL B-24157 / PYR-1) (Mycobacterium vanbaalenii).